The following is a 331-amino-acid chain: Adenosine deaminase (331 aa).

2 residues coordinate Zn(2+): H12 and H14. Substrate is bound by residues H14, D16, and G170. H197 contacts Zn(2+). The active-site Proton donor is the E200. D278 contributes to the Zn(2+) binding site. Residue D279 coordinates substrate.

Belongs to the metallo-dependent hydrolases superfamily. Adenosine and AMP deaminases family. Adenosine deaminase subfamily. Zn(2+) is required as a cofactor.

It carries out the reaction adenosine + H2O + H(+) = inosine + NH4(+). The enzyme catalyses 2'-deoxyadenosine + H2O + H(+) = 2'-deoxyinosine + NH4(+). In terms of biological role, catalyzes the hydrolytic deamination of adenosine and 2-deoxyadenosine. The polypeptide is Adenosine deaminase (Shewanella baltica (strain OS223)).